Here is a 405-residue protein sequence, read N- to C-terminus: Accessory Sec system protein translocase subunit SecY2 (405 aa).

Helical transmembrane passes span methionine 14–valine 34, leucine 65–phenylalanine 85, methionine 104–valine 124, phenylalanine 131–leucine 151, alanine 156–proline 176, leucine 190–phenylalanine 210, glycine 243–leucine 263, proline 285–valine 305, phenylalanine 343–leucine 363, and leucine 368–isoleucine 388.

This sequence belongs to the SecY/SEC61-alpha family. SecY2 subfamily. In terms of assembly, component of the accessory SecA2/SecY2 protein translocase complex required to export cell wall proteins. May form heterotrimers with SecE and SecG subunits.

Its subcellular location is the cell membrane. In terms of biological role, part of the accessory SecA2/SecY2 system specifically required for export of possible cell wall proteins. The central subunit of a protein translocation channel. The sequence is that of Accessory Sec system protein translocase subunit SecY2 from Streptococcus oralis (strain Uo5).